A 198-amino-acid chain; its full sequence is 7-methyl-GTP pyrophosphatase (198 aa).

D72 acts as the Proton acceptor in catalysis.

The protein belongs to the Maf family. YceF subfamily. A divalent metal cation serves as cofactor.

Its subcellular location is the cytoplasm. The enzyme catalyses N(7)-methyl-GTP + H2O = N(7)-methyl-GMP + diphosphate + H(+). In terms of biological role, nucleoside triphosphate pyrophosphatase that hydrolyzes 7-methyl-GTP (m(7)GTP). May have a dual role in cell division arrest and in preventing the incorporation of modified nucleotides into cellular nucleic acids. The chain is 7-methyl-GTP pyrophosphatase from Idiomarina loihiensis (strain ATCC BAA-735 / DSM 15497 / L2-TR).